A 462-amino-acid polypeptide reads, in one-letter code: Chitinase 1 (462 aa).

A signal peptide spans 1-17; it reads MILNLIILLAISIVASA. Positions 18–291 constitute a GH18 domain; that stretch reads SNIAAYWGQN…NQLYQALSGS (274 aa). The N-linked (GlcNAc...) asparagine glycan is linked to asparagine 57. Glutamate 147 serves as the catalytic Proton donor.

The protein belongs to the glycosyl hydrolase 18 family. Chitinase class III subfamily.

The protein localises to the secreted. It catalyses the reaction Random endo-hydrolysis of N-acetyl-beta-D-glucosaminide (1-&gt;4)-beta-linkages in chitin and chitodextrins.. The sequence is that of Chitinase 1 (CHT1) from Candida albicans (Yeast).